The chain runs to 292 residues: Putative peptidyl-prolyl cis-trans isomerase NifM (292 aa).

In terms of domain architecture, PpiC spans 148-243 (HILVTINEDF…IGFHVLYCES (96 aa)).

It belongs to the PpiC/parvulin rotamase family.

It catalyses the reaction [protein]-peptidylproline (omega=180) = [protein]-peptidylproline (omega=0). Functionally, required for the activation and stabilization of the iron-component (NifH) of nitrogenase. Probable PPIase. The polypeptide is Putative peptidyl-prolyl cis-trans isomerase NifM (nifM) (Azotobacter vinelandii).